The primary structure comprises 223 residues: Ribose-5-phosphate isomerase A (223 aa).

Substrate is bound by residues 26-29, 82-85, and 95-98; these read TGST, DGAD, and KGGG. E104 serves as the catalytic Proton acceptor. A substrate-binding site is contributed by K122.

Belongs to the ribose 5-phosphate isomerase family. Homodimer.

It carries out the reaction aldehydo-D-ribose 5-phosphate = D-ribulose 5-phosphate. It participates in carbohydrate degradation; pentose phosphate pathway; D-ribose 5-phosphate from D-ribulose 5-phosphate (non-oxidative stage): step 1/1. Functionally, catalyzes the reversible conversion of ribose-5-phosphate to ribulose 5-phosphate. The protein is Ribose-5-phosphate isomerase A of Streptococcus agalactiae serotype Ia (strain ATCC 27591 / A909 / CDC SS700).